A 315-amino-acid chain; its full sequence is Mycothiol acetyltransferase (315 aa).

N-acetyltransferase domains are found at residues 8 to 145 and 163 to 315; these read VETS…LPLD and VSLR…DATA. Residue Glu-39 participates in 1D-myo-inositol 2-(L-cysteinylamino)-2-deoxy-alpha-D-glucopyranoside binding. Acetyl-CoA is bound by residues 81–83 and 89–94; these read LVV and HHGVGT. 1D-myo-inositol 2-(L-cysteinylamino)-2-deoxy-alpha-D-glucopyranoside is bound by residues Glu-190, Lys-229, and Glu-243. Residue 247 to 249 participates in acetyl-CoA binding; that stretch reads LGV. Position 281 (Tyr-281) interacts with 1D-myo-inositol 2-(L-cysteinylamino)-2-deoxy-alpha-D-glucopyranoside. 286 to 291 contributes to the acetyl-CoA binding site; sequence NTVAIR.

This sequence belongs to the acetyltransferase family. MshD subfamily. As to quaternary structure, monomer.

The enzyme catalyses 1D-myo-inositol 2-(L-cysteinylamino)-2-deoxy-alpha-D-glucopyranoside + acetyl-CoA = mycothiol + CoA + H(+). Its function is as follows. Catalyzes the transfer of acetyl from acetyl-CoA to desacetylmycothiol (Cys-GlcN-Ins) to form mycothiol. The sequence is that of Mycothiol acetyltransferase from Sanguibacter keddieii (strain ATCC 51767 / DSM 10542 / NCFB 3025 / ST-74).